The primary structure comprises 163 residues: SsrA-binding protein (163 aa).

Belongs to the SmpB family.

Its subcellular location is the cytoplasm. In terms of biological role, required for rescue of stalled ribosomes mediated by trans-translation. Binds to transfer-messenger RNA (tmRNA), required for stable association of tmRNA with ribosomes. tmRNA and SmpB together mimic tRNA shape, replacing the anticodon stem-loop with SmpB. tmRNA is encoded by the ssrA gene; the 2 termini fold to resemble tRNA(Ala) and it encodes a 'tag peptide', a short internal open reading frame. During trans-translation Ala-aminoacylated tmRNA acts like a tRNA, entering the A-site of stalled ribosomes, displacing the stalled mRNA. The ribosome then switches to translate the ORF on the tmRNA; the nascent peptide is terminated with the 'tag peptide' encoded by the tmRNA and targeted for degradation. The ribosome is freed to recommence translation, which seems to be the essential function of trans-translation. This chain is SsrA-binding protein, found in Shewanella baltica (strain OS223).